Here is a 171-residue protein sequence, read N- to C-terminus: Superoxide dismutase [Cu-Zn] 2 (171 aa).

Positions 1–20 (MKKLSGVLAGSLLLISASFS) are cleaved as a signal peptide. Residues His-67, His-69, and His-85 each coordinate Cu cation. Cys-74 and Cys-167 are oxidised to a cystine. Zn(2+) contacts are provided by His-85, His-93, His-102, and Asp-105. His-147 contacts Cu cation.

The protein belongs to the Cu-Zn superoxide dismutase family. Cu cation serves as cofactor. It depends on Zn(2+) as a cofactor.

The catalysed reaction is 2 superoxide + 2 H(+) = H2O2 + O2. Its function is as follows. Destroys radicals which are normally produced within the cells and which are toxic to biological systems. The protein is Superoxide dismutase [Cu-Zn] 2 (sodC2) of Aquifex aeolicus (strain VF5).